The primary structure comprises 390 residues: Lipid-A-disaccharide synthase (390 aa).

Belongs to the LpxB family.

It carries out the reaction a lipid X + a UDP-2-N,3-O-bis[(3R)-3-hydroxyacyl]-alpha-D-glucosamine = a lipid A disaccharide + UDP + H(+). It participates in bacterial outer membrane biogenesis; LPS lipid A biosynthesis. Its function is as follows. Condensation of UDP-2,3-diacylglucosamine and 2,3-diacylglucosamine-1-phosphate to form lipid A disaccharide, a precursor of lipid A, a phosphorylated glycolipid that anchors the lipopolysaccharide to the outer membrane of the cell. The protein is Lipid-A-disaccharide synthase (lpxB) of Haemophilus influenzae (strain ATCC 51907 / DSM 11121 / KW20 / Rd).